The following is a 245-amino-acid chain: Large ribosomal subunit protein uL2 (245 aa).

A disordered region spans residues 196-226 (SPYAHPHGGGSHQKGGTPVSKTAPPGQKVGF).

This sequence belongs to the universal ribosomal protein uL2 family. Part of the 50S ribosomal subunit. Forms a bridge to the 30S subunit in the 70S ribosome.

In terms of biological role, one of the primary rRNA binding proteins. Required for association of the 30S and 50S subunits to form the 70S ribosome, for tRNA binding and peptide bond formation. It has been suggested to have peptidyltransferase activity; this is somewhat controversial. Makes several contacts with the 16S rRNA in the 70S ribosome. In Pyrobaculum neutrophilum (strain DSM 2338 / JCM 9278 / NBRC 100436 / V24Sta) (Thermoproteus neutrophilus), this protein is Large ribosomal subunit protein uL2.